We begin with the raw amino-acid sequence, 202 residues long: Holliday junction resolvase RecU (202 aa).

Mg(2+)-binding residues include T85, D87, E100, and Q119.

It belongs to the RecU family. Mg(2+) is required as a cofactor.

It is found in the cytoplasm. It catalyses the reaction Endonucleolytic cleavage at a junction such as a reciprocal single-stranded crossover between two homologous DNA duplexes (Holliday junction).. Its function is as follows. Endonuclease that resolves Holliday junction intermediates in genetic recombination. Cleaves mobile four-strand junctions by introducing symmetrical nicks in paired strands. Promotes annealing of linear ssDNA with homologous dsDNA. Required for DNA repair, homologous recombination and chromosome segregation. This chain is Holliday junction resolvase RecU, found in Streptococcus equi subsp. zooepidemicus (strain MGCS10565).